Consider the following 32-residue polypeptide: ilv operon leader peptide (32 aa).

The chain is ilv operon leader peptide (ilvL) from Yersinia pestis.